The chain runs to 272 residues: Orotidine 5'-phosphate decarboxylase (272 aa).

Lys-95 functions as the Proton donor in the catalytic mechanism.

This sequence belongs to the OMP decarboxylase family. Type 2 subfamily.

It carries out the reaction orotidine 5'-phosphate + H(+) = UMP + CO2. It functions in the pathway pyrimidine metabolism; UMP biosynthesis via de novo pathway; UMP from orotate: step 2/2. This chain is Orotidine 5'-phosphate decarboxylase, found in Bordetella petrii (strain ATCC BAA-461 / DSM 12804 / CCUG 43448).